The primary structure comprises 120 residues: MSKAKVTNARRKRSVRLKLRRSGGGRPRLSVFRSSKHIYAQVIDDLKGETLASASSLEKSMRDGGKTGADIDAAKAVGKLLAERAAEKGVKEVVFDRGSYLYHGRVKALADAARESGLSF.

The interval 1–26 (MSKAKVTNARRKRSVRLKLRRSGGGR) is disordered. Positions 8–23 (NARRKRSVRLKLRRSG) are enriched in basic residues.

The protein belongs to the universal ribosomal protein uL18 family. As to quaternary structure, part of the 50S ribosomal subunit; part of the 5S rRNA/L5/L18/L25 subcomplex. Contacts the 5S and 23S rRNAs.

This is one of the proteins that bind and probably mediate the attachment of the 5S RNA into the large ribosomal subunit, where it forms part of the central protuberance. In Bradyrhizobium diazoefficiens (strain JCM 10833 / BCRC 13528 / IAM 13628 / NBRC 14792 / USDA 110), this protein is Large ribosomal subunit protein uL18.